Consider the following 190-residue polypeptide: Peptidyl-tRNA hydrolase (190 aa).

Residue tyrosine 14 coordinates tRNA. The active-site Proton acceptor is histidine 19. TRNA is bound by residues tyrosine 64, asparagine 66, and asparagine 112.

This sequence belongs to the PTH family. In terms of assembly, monomer.

It localises to the cytoplasm. The catalysed reaction is an N-acyl-L-alpha-aminoacyl-tRNA + H2O = an N-acyl-L-amino acid + a tRNA + H(+). Functionally, hydrolyzes ribosome-free peptidyl-tRNAs (with 1 or more amino acids incorporated), which drop off the ribosome during protein synthesis, or as a result of ribosome stalling. In terms of biological role, catalyzes the release of premature peptidyl moieties from peptidyl-tRNA molecules trapped in stalled 50S ribosomal subunits, and thus maintains levels of free tRNAs and 50S ribosomes. This Chlorobium phaeobacteroides (strain DSM 266 / SMG 266 / 2430) protein is Peptidyl-tRNA hydrolase.